The primary structure comprises 545 residues: ATP synthase subunit alpha (545 aa).

172–179 is a binding site for ATP; sequence GDRKTGKT.

The protein belongs to the ATPase alpha/beta chains family. In terms of assembly, F-type ATPases have 2 components, CF(1) - the catalytic core - and CF(0) - the membrane proton channel. CF(1) has five subunits: alpha(3), beta(3), gamma(1), delta(1), epsilon(1). CF(0) has three main subunits: a(1), b(2) and c(9-12). The alpha and beta chains form an alternating ring which encloses part of the gamma chain. CF(1) is attached to CF(0) by a central stalk formed by the gamma and epsilon chains, while a peripheral stalk is formed by the delta and b chains.

The protein resides in the cell membrane. The enzyme catalyses ATP + H2O + 4 H(+)(in) = ADP + phosphate + 5 H(+)(out). Produces ATP from ADP in the presence of a proton gradient across the membrane. The alpha chain is a regulatory subunit. In Nocardia farcinica (strain IFM 10152), this protein is ATP synthase subunit alpha.